The following is a 404-amino-acid chain: Probable tRNA sulfurtransferase (404 aa).

The region spanning 60–165 (HEVAESLKEI…DEAAYISYED (106 aa)) is the THUMP domain. Residues 183–184 (ML), 208–209 (HF), arginine 265, glycine 287, and glutamine 296 each bind ATP.

This sequence belongs to the ThiI family.

It is found in the cytoplasm. It catalyses the reaction [ThiI sulfur-carrier protein]-S-sulfanyl-L-cysteine + a uridine in tRNA + 2 reduced [2Fe-2S]-[ferredoxin] + ATP + H(+) = [ThiI sulfur-carrier protein]-L-cysteine + a 4-thiouridine in tRNA + 2 oxidized [2Fe-2S]-[ferredoxin] + AMP + diphosphate. The enzyme catalyses [ThiS sulfur-carrier protein]-C-terminal Gly-Gly-AMP + S-sulfanyl-L-cysteinyl-[cysteine desulfurase] + AH2 = [ThiS sulfur-carrier protein]-C-terminal-Gly-aminoethanethioate + L-cysteinyl-[cysteine desulfurase] + A + AMP + 2 H(+). It participates in cofactor biosynthesis; thiamine diphosphate biosynthesis. Functionally, catalyzes the ATP-dependent transfer of a sulfur to tRNA to produce 4-thiouridine in position 8 of tRNAs, which functions as a near-UV photosensor. Also catalyzes the transfer of sulfur to the sulfur carrier protein ThiS, forming ThiS-thiocarboxylate. This is a step in the synthesis of thiazole, in the thiamine biosynthesis pathway. The sulfur is donated as persulfide by IscS. This Streptococcus agalactiae serotype V (strain ATCC BAA-611 / 2603 V/R) protein is Probable tRNA sulfurtransferase.